The chain runs to 273 residues: 4-hydroxy-tetrahydrodipicolinate reductase 1 (273 aa).

NAD(+) contacts are provided by residues 13–18 (GAAGRM) and Glu39. Residue Arg40 coordinates NADP(+). NAD(+) contacts are provided by residues 103–105 (GTT) and 127–130 (SGNM). The active-site Proton donor/acceptor is His161. His162 contacts (S)-2,3,4,5-tetrahydrodipicolinate. Lys165 serves as the catalytic Proton donor. Residue 171 to 172 (GT) participates in (S)-2,3,4,5-tetrahydrodipicolinate binding.

Belongs to the DapB family.

The protein localises to the cytoplasm. The catalysed reaction is (S)-2,3,4,5-tetrahydrodipicolinate + NAD(+) + H2O = (2S,4S)-4-hydroxy-2,3,4,5-tetrahydrodipicolinate + NADH + H(+). It carries out the reaction (S)-2,3,4,5-tetrahydrodipicolinate + NADP(+) + H2O = (2S,4S)-4-hydroxy-2,3,4,5-tetrahydrodipicolinate + NADPH + H(+). The protein operates within amino-acid biosynthesis; L-lysine biosynthesis via DAP pathway; (S)-tetrahydrodipicolinate from L-aspartate: step 4/4. Functionally, catalyzes the conversion of 4-hydroxy-tetrahydrodipicolinate (HTPA) to tetrahydrodipicolinate. This Mesorhizobium japonicum (strain LMG 29417 / CECT 9101 / MAFF 303099) (Mesorhizobium loti (strain MAFF 303099)) protein is 4-hydroxy-tetrahydrodipicolinate reductase 1.